Reading from the N-terminus, the 626-residue chain is Chaperone protein DnaK (626 aa).

T197 is subject to Phosphothreonine; by autocatalysis. The span at 595–614 shows a compositional bias: low complexity; sequence QNMAQQQQAQGGAQQQNQNK. The tract at residues 595 to 626 is disordered; that stretch reads QNMAQQQQAQGGAQQQNQNKGGDDDVIDAEVE.

It belongs to the heat shock protein 70 family.

Acts as a chaperone. The protein is Chaperone protein DnaK of Nautilia profundicola (strain ATCC BAA-1463 / DSM 18972 / AmH).